Here is a 63-residue protein sequence, read N- to C-terminus: Large ribosomal subunit protein bL35 (63 aa).

The protein belongs to the bacterial ribosomal protein bL35 family.

This Campylobacter jejuni subsp. jejuni serotype O:2 (strain ATCC 700819 / NCTC 11168) protein is Large ribosomal subunit protein bL35.